Consider the following 298-residue polypeptide: Acetylglutamate kinase (298 aa).

Substrate-binding positions include 69–70, R91, and N196; that span reads GG.

It belongs to the acetylglutamate kinase family. ArgB subfamily.

Its subcellular location is the cytoplasm. The catalysed reaction is N-acetyl-L-glutamate + ATP = N-acetyl-L-glutamyl 5-phosphate + ADP. The protein operates within amino-acid biosynthesis; L-arginine biosynthesis; N(2)-acetyl-L-ornithine from L-glutamate: step 2/4. Catalyzes the ATP-dependent phosphorylation of N-acetyl-L-glutamate. In Rhodopseudomonas palustris (strain BisB18), this protein is Acetylglutamate kinase.